A 514-amino-acid polypeptide reads, in one-letter code: Serine--tRNA ligase, cytoplasmic (514 aa).

Methionine 1 carries the post-translational modification N-acetylmethionine. The tract at residues 9 to 61 (RVDKGGDPALIRESQEKRFKDPGLVDQLVKADSEWRRCRFRADNLNKLKNLCS) is interaction with tRNA. The residue at position 241 (serine 241) is a Phosphoserine. L-serine-binding residues include threonine 271 and arginine 302. ATP contacts are provided by residues 302-304 (RQE) and 318-321 (VHQF). Lysine 323 carries the N6-acetyllysine modification. Residue glutamate 325 coordinates L-serine. 391–394 (ELVS) lines the ATP pocket. Asparagine 427 is an L-serine binding site. Residues 475–514 (PIDQEPSKKQKKQHEGSKKKGAARDVALESQLQNMEVTDA) are disordered. Residues 479-501 (EPSKKQKKQHEGSKKKGAARDVA) are compositionally biased toward basic and acidic residues. The Nuclear localization signal motif lies at 482–494 (KKQKKQHEGSKKK). Over residues 504–514 (SQLQNMEVTDA) the composition is skewed to polar residues.

It belongs to the class-II aminoacyl-tRNA synthetase family. Type-1 seryl-tRNA synthetase subfamily. Homodimer. The tRNA molecule may bind across the dimer. Interacts with SIRT2. Interacts with METTL6; interaction is required for the tRNA N(3)-methylcytidine methyltransferase activity of METTL6.

The protein resides in the cytoplasm. It is found in the nucleus. It catalyses the reaction tRNA(Ser) + L-serine + ATP = L-seryl-tRNA(Ser) + AMP + diphosphate + H(+). The enzyme catalyses tRNA(Sec) + L-serine + ATP = L-seryl-tRNA(Sec) + AMP + diphosphate + H(+). Its pathway is aminoacyl-tRNA biosynthesis; selenocysteinyl-tRNA(Sec) biosynthesis; L-seryl-tRNA(Sec) from L-serine and tRNA(Sec): step 1/1. In terms of biological role, catalyzes the attachment of serine to tRNA(Ser) in a two-step reaction: serine is first activated by ATP to form Ser-AMP and then transferred to the acceptor end of tRNA(Ser). Is probably also able to aminoacylate tRNA(Sec) with serine, to form the misacylated tRNA L-seryl-tRNA(Sec), which will be further converted into selenocysteinyl-tRNA(Sec). In the nucleus, binds to the VEGFA core promoter and prevents MYC binding and transcriptional activation by MYC. Recruits SIRT2 to the VEGFA promoter, promoting deacetylation of histone H4 at 'Lys-16' (H4K16). Thereby, inhibits the production of VEGFA and sprouting angiogenesis mediated by VEGFA. This Bos taurus (Bovine) protein is Serine--tRNA ligase, cytoplasmic (SARS1).